The chain runs to 361 residues: Chitinase-3-like protein 1 (361 aa).

Positions 1–361 constitute a GH18 domain; that stretch reads YKLICYYTSW…SAVKDVLAEV (361 aa). Residues C5 and C30 are joined by a disulfide bond. Residue N39 is glycosylated (N-linked (GlcNAc...) asparagine). Chitin is bound by residues 49 to 50, 76 to 79, Y120, 183 to 186, and R241; these read EW, GGWN, and LTYD. Cysteines 278 and 342 form a disulfide. An important for AKT1 activation and IL8 production region spans residues 302–316; that stretch reads QWVAYDDQESVKNKA. W330 contacts chitin. An N-linked (GlcNAc...) asparagine glycan is attached at N345.

The protein belongs to the glycosyl hydrolase 18 family. In terms of assembly, monomer. Detected in mammary gland.

The protein localises to the secreted. The protein resides in the extracellular space. It localises to the cytoplasm. Its subcellular location is the perinuclear region. It is found in the endoplasmic reticulum. Its function is as follows. Carbohydrate-binding lectin with a preference for chitin. Has no chitinase activity. May play a role in tissue remodeling and in the capacity of cells to respond to and cope with changes in their environment. Plays a role in T-helper cell type 2 (Th2) inflammatory response and IL-13-induced inflammation, regulating allergen sensitization, inflammatory cell apoptosis, dendritic cell accumulation and M2 macrophage differentiation. Facilitates invasion of pathogenic enteric bacteria into colonic mucosa and lymphoid organs. Mediates activation of AKT1 signaling pathway and subsequent IL8 production in colonic epithelial cells. Regulates antibacterial responses in lung by contributing to macrophage bacterial killing, controlling bacterial dissemination and augmenting host tolerance. Also regulates hyperoxia-induced injury, inflammation and epithelial apoptosis in lung. In Ovis aries (Sheep), this protein is Chitinase-3-like protein 1 (CHI3L1).